The following is a 129-amino-acid chain: Large ribosomal subunit protein bL12 (129 aa).

Belongs to the bacterial ribosomal protein bL12 family. As to quaternary structure, homodimer. Part of the ribosomal stalk of the 50S ribosomal subunit. Forms a multimeric L10(L12)X complex, where L10 forms an elongated spine to which 2 to 4 L12 dimers bind in a sequential fashion. Binds GTP-bound translation factors.

Its function is as follows. Forms part of the ribosomal stalk which helps the ribosome interact with GTP-bound translation factors. Is thus essential for accurate translation. In Maridesulfovibrio salexigens (strain ATCC 14822 / DSM 2638 / NCIMB 8403 / VKM B-1763) (Desulfovibrio salexigens), this protein is Large ribosomal subunit protein bL12.